A 751-amino-acid polypeptide reads, in one-letter code: MLGDDKDSDDLNLFLNAIGEAGDEEGPTSFNDIDFLTFDDEDLHNPFQDCETSPINEPPKVYVAPRVMISHQDSFSEDSRTDVIEDARILPASPRLRVPASPRAFVYPRSVESPRFGSPRSVESPCFGSPIGVIDTASPFESVREAVSKFGGITDWKAHKIQTIERRKMVDEELEKIQEAMPEYKREAELAEEAKYDALEELENTKGLIEELKLELEKAEKEEQQAKQDSELAQMRVEEMEKGVANEASVAVKTQLEVAKARQVSATSELRSVREEIEMVSNEYKDMLREKELAAERADIAVLEAKEIERTMDGLSIELIATKELLESVHTAHLEAEEKRFSVAMARDQDVYNWEKELKMVENDIERLNQEVRAADDVKAKLETASALQHDLKTELAAFTDISSGNLLLEKNDIHAAVESARRELEEVKANIEKAASEVKKLKIIAGSLQSELGRERQDLEETKQKESTGLARTNDKDAGEELVETAKKLEQATKEAEDAKALATASRDELRMAKELSEQAKRGMSTIESRLVEAKKEMEAARASEKLALAAIKALQETESSQRFEEINNSPRSIIISVEEYYELSKQALESEEEANTRLSEIVSQIEVAKEEESRILEKLEEVNREMSVRKAELKEANGKAEKARDGKLGMEQELRKWRSENGKRRTDEGREPEKSPTRSSTEGRNKENGFGQSKSFAFGEQGSSSNNTGGSTTTNNNNLTPETKKKKKKLSLFPKVFMFLSRKKSHSHK.

Position 113 is a phosphoserine (Ser-113). Coiled-coil stretches lie at residues 165–558 (ERRK…ALQE) and 588–647 (QALE…KARD). Composition is skewed to basic and acidic residues over residues 455-467 (RERQ…KQKE) and 625-689 (NREM…RNKE). 2 disordered regions span residues 455–479 (RERQ…DKDA) and 625–751 (NREM…HSHK). A compositionally biased stretch (low complexity) spans 704–723 (GSSSNNTGGSTTTNNNNLTP).

The protein belongs to the WEB family.

This Arabidopsis thaliana (Mouse-ear cress) protein is Protein WEAK CHLOROPLAST MOVEMENT UNDER BLUE LIGHT-like 3 (WEL3).